Consider the following 1287-residue polypeptide: Pullulanase A (1287 aa).

An N-terminal signal peptide occupies residues 1–44; that stretch reads MRKTPSHTEKKMVYSIRSLKNGTGSVLIGASLVLLAMATPTISS. The disordered stretch occupies residues 42–139; the sequence is ISSDESTPTT…VTTETKAEEP (98 aa). The span at 48–61 shows a compositional bias: low complexity; sequence TPTTNEPNNRNTTT. Residues 79–90 are compositionally biased toward polar residues; the sequence is DISSPGNANASL. Low complexity-rich tracts occupy residues 99–113 and 122–133; these read TEPT…DPAP and EPTTSTSPVTTE. Residues 163–165, Trp-175, Asp-221, 270–272, Trp-283, Lys-325, and Asn-330 each bind substrate; these read WTW and WYW. The Ca(2+) site is built by Ser-668 and Tyr-670. Substrate is bound by residues 674 to 675 and Phe-750; that span reads YD. The Nucleophile role is filled by Asp-785. The active-site Proton donor is the Glu-814. Trp-816 serves as a coordination point for substrate. Residues Met-835, Thr-838, and Asp-839 each contribute to the Ca(2+) site. The substrate site is built by Asp-846, Arg-849, and Tyr-856. Residues Asp-889 and Asp-893 each contribute to the Ca(2+) site. Residues Asn-903, Lys-976, and 996–998 each bind substrate; that span reads DSY. Asp-999 lines the Ca(2+) pocket. Positions 1147–1255 are disordered; sequence VSQNGTSHES…TPDRQAELPN (109 aa). Residues 1156–1203 show a composition bias toward basic and acidic residues; it reads STAEEKPDSTPSKPEHQNEASHPAHQDPAPEARPDSTKPDAKVADAEN. Residues 1212–1225 are compositionally biased toward low complexity; sequence SQAEQPAQEAQASS. Residues 1228 to 1239 show a composition bias toward basic and acidic residues; sequence EAVRKESVENSS. The LPXTG sorting signal motif lies at 1253–1257; sequence LPNTG. At Thr-1256 the chain carries Pentaglycyl murein peptidoglycan amidated threonine. The propeptide at 1257–1287 is removed by sortase; the sequence is GIKNENKLLFAGISLLALLGLGFLLKNKKEN.

This sequence belongs to the glycosyl hydrolase 13 family.

The protein localises to the secreted. The protein resides in the cell wall. It localises to the cell surface. The catalysed reaction is Hydrolysis of (1-&gt;6)-alpha-D-glucosidic linkages in pullulan, amylopectin and glycogen, and in the alpha- and beta-limit dextrins of amylopectin and glycogen.. Its activity is regulated as follows. Inhibited by 4-O-alpha-D-glucopyranosylmoranoline (G1M). Its function is as follows. Virulence factor. Involved in the degradation of glycogen of the mammalian host cells. Hydrolyzes the alpha-1,6-branchpoints of glycogen. Hydrolyzes pullulan. Does not hydrolyze dextran. Binds to mouse lung alveolar type II cells that are rich in glycogen stores. Is an alpha-glucan-specific carbohydrate-binding protein, which binds to amylose (pure alpha-(1,4)-linked glucose), amylopectin (alpha-(1,4)-linked glucose with alpha-(1,6) branch points), pullulan (linear polymer of mixed alpha-(1,4)- and alpha-(1,6)-linked glucose) and glycogen (similar to amylopectin with more frequent alpha-(1,6) branch points) in vitro. Does not bind to dextran (a linear polymer of alpha-(1,6)-linked glucose). The chain is Pullulanase A from Streptococcus pneumoniae.